A 123-amino-acid chain; its full sequence is Putative oocyte-secreted protein 1 homolog (123 aa).

The N-terminal stretch at 1-26 (MKTILGFKGLFYLHSLIWTCAGDWSA) is a signal peptide.

The protein belongs to the PLAC1 family.

Its subcellular location is the secreted. Its function is as follows. May be involved in cell differentiation. The polypeptide is Putative oocyte-secreted protein 1 homolog (OOSP1) (Homo sapiens (Human)).